A 429-amino-acid chain; its full sequence is MNNFKNLRGTVDLLPDQLIKWQNVEKIIIQQLFRSSVKEIRTPILEMTELFMRGIGEGTDVVSKEMYTFLDRGERSCTLRPEGTASVARALIQHGISTRPSQKLWYMGPMFRYERPQAGRQRQFHQLGVEFIGYESVNSDIEIITLAWDILQKLGIKELNLEINTLGDHIDRSNFQKAFLKWLEVNKNSLDLDSQRRIDKNPLRILDTKNVQTKQILKGAPRLFDFLSEKSLERYLIIKEKLKLLKIPFIENFNLVRGLDYYTHTAFEITTGTLGSQATVCGGGRYDSLISQMGGAETPAIGFAIGLERLIILCGSELEETRETDIYIVNKGIHAEILAMELSRKLRNYDLVVELDLSGASFSKQFKKANKLKSKSIIVIGDDEAVKNEFVIRLFNNDNSVNKEETISIEDNMKLEKWIKSNLILDKNL.

This sequence belongs to the class-II aminoacyl-tRNA synthetase family. In terms of assembly, homodimer.

The protein resides in the cytoplasm. It carries out the reaction tRNA(His) + L-histidine + ATP = L-histidyl-tRNA(His) + AMP + diphosphate + H(+). The sequence is that of Histidine--tRNA ligase from Prochlorococcus marinus subsp. pastoris (strain CCMP1986 / NIES-2087 / MED4).